The following is a 376-amino-acid chain: DNA methyltransferase CcrM (376 aa).

The 98-residue stretch at 273 to 370 (KATLSVMTGK…IDELRSVIRN (98 aa)) folds into the RAMA domain.

Belongs to the N(4)/N(6)-methyltransferase family.

The enzyme catalyses a 2'-deoxyadenosine in DNA + S-adenosyl-L-methionine = an N(6)-methyl-2'-deoxyadenosine in DNA + S-adenosyl-L-homocysteine + H(+). Functionally, a beta subtype methylase that recognizes the double-stranded sequence 5'-GANTC-3' and methylates A-2 on both strands. Overexpression leads to many branched and bloated cells, two to three times the size of wild-type cells, and cells that have 1-3 times the normal amount of DNA. Contributes to the accurate cell-cycle control of DNA replication and cellular morphology. Can fully replace its ortholog in C.crescentus. This Rhizobium meliloti (strain 1021) (Ensifer meliloti) protein is DNA methyltransferase CcrM (smeIM).